Here is a 107-residue protein sequence, read N- to C-terminus: Sperm-specific class P protein 34 (107 aa).

The interval Met-1–Ser-26 is disordered. An MSP domain is found at Met-1–Ala-107. Positions Gly-15–Glu-25 are enriched in polar residues.

In terms of tissue distribution, expressed at higher level in testis.

In Caenorhabditis elegans, this protein is Sperm-specific class P protein 34 (ssp-34).